The chain runs to 231 residues: Aspartate/glutamate leucyltransferase (231 aa).

The protein belongs to the R-transferase family. Bpt subfamily.

The protein resides in the cytoplasm. It catalyses the reaction N-terminal L-glutamyl-[protein] + L-leucyl-tRNA(Leu) = N-terminal L-leucyl-L-glutamyl-[protein] + tRNA(Leu) + H(+). It carries out the reaction N-terminal L-aspartyl-[protein] + L-leucyl-tRNA(Leu) = N-terminal L-leucyl-L-aspartyl-[protein] + tRNA(Leu) + H(+). Its function is as follows. Functions in the N-end rule pathway of protein degradation where it conjugates Leu from its aminoacyl-tRNA to the N-termini of proteins containing an N-terminal aspartate or glutamate. This Pseudoalteromonas atlantica (strain T6c / ATCC BAA-1087) protein is Aspartate/glutamate leucyltransferase.